The primary structure comprises 292 residues: 4-diphosphocytidyl-2-C-methyl-D-erythritol kinase (292 aa).

The active site involves K11. 95–105 (PVSAGLAGGSS) is a binding site for ATP. D137 is a catalytic residue.

This sequence belongs to the GHMP kinase family. IspE subfamily.

The enzyme catalyses 4-CDP-2-C-methyl-D-erythritol + ATP = 4-CDP-2-C-methyl-D-erythritol 2-phosphate + ADP + H(+). The protein operates within isoprenoid biosynthesis; isopentenyl diphosphate biosynthesis via DXP pathway; isopentenyl diphosphate from 1-deoxy-D-xylulose 5-phosphate: step 3/6. Its function is as follows. Catalyzes the phosphorylation of the position 2 hydroxy group of 4-diphosphocytidyl-2C-methyl-D-erythritol. The protein is 4-diphosphocytidyl-2-C-methyl-D-erythritol kinase of Alkaliphilus oremlandii (strain OhILAs) (Clostridium oremlandii (strain OhILAs)).